Reading from the N-terminus, the 311-residue chain is tRNA-cytidine(32) 2-sulfurtransferase (311 aa).

The interval 18–38 (KVGADHGPSEENGSSHPLFDN) is disordered. The PP-loop motif signature appears at 77–82 (SGGKDS). Residues Cys152, Cys155, and Cys243 each contribute to the [4Fe-4S] cluster site.

It belongs to the TtcA family. In terms of assembly, homodimer. Mg(2+) is required as a cofactor. [4Fe-4S] cluster serves as cofactor.

Its subcellular location is the cytoplasm. The enzyme catalyses cytidine(32) in tRNA + S-sulfanyl-L-cysteinyl-[cysteine desulfurase] + AH2 + ATP = 2-thiocytidine(32) in tRNA + L-cysteinyl-[cysteine desulfurase] + A + AMP + diphosphate + H(+). The protein operates within tRNA modification. Its function is as follows. Catalyzes the ATP-dependent 2-thiolation of cytidine in position 32 of tRNA, to form 2-thiocytidine (s(2)C32). The sulfur atoms are provided by the cysteine/cysteine desulfurase (IscS) system. The polypeptide is tRNA-cytidine(32) 2-sulfurtransferase (Agrobacterium fabrum (strain C58 / ATCC 33970) (Agrobacterium tumefaciens (strain C58))).